The chain runs to 508 residues: ATP synthase subunit alpha, mitochondrial (508 aa).

171 to 178 lines the ATP pocket; it reads GDRQTGKT.

The protein belongs to the ATPase alpha/beta chains family. F-type ATPases have 2 components, CF(1) - the catalytic core - and CF(0) - the membrane proton channel. CF(1) has five subunits: alpha(3), beta(3), gamma(1), delta(1), epsilon(1). CF(0) has three main subunits: a, b and c.

The protein resides in the mitochondrion. The protein localises to the mitochondrion inner membrane. Its function is as follows. Mitochondrial membrane ATP synthase (F(1)F(0) ATP synthase or Complex V) produces ATP from ADP in the presence of a proton gradient across the membrane which is generated by electron transport complexes of the respiratory chain. F-type ATPases consist of two structural domains, F(1) - containing the extramembraneous catalytic core, and F(0) - containing the membrane proton channel, linked together by a central stalk and a peripheral stalk. During catalysis, ATP synthesis in the catalytic domain of F(1) is coupled via a rotary mechanism of the central stalk subunits to proton translocation. Subunits alpha and beta form the catalytic core in F(1). Rotation of the central stalk against the surrounding alpha(3)beta(3) subunits leads to hydrolysis of ATP in three separate catalytic sites on the beta subunits. Subunit alpha does not bear the catalytic high-affinity ATP-binding sites. In Phaseolus vulgaris (Kidney bean), this protein is ATP synthase subunit alpha, mitochondrial (ATPA).